The primary structure comprises 134 residues: Small ribosomal subunit protein bS16 (134 aa).

Residues 81-134 are disordered; the sequence is LAKRPARSNPKKAEPGKKAQERLAAARQAEEEAKAAAEAAAAAPAEAPAEEAAS. Residues 91-101 show a composition bias toward basic and acidic residues; it reads KKAEPGKKAQE. Residues 116 to 134 show a composition bias toward low complexity; it reads AAEAAAAAPAEAPAEEAAS.

Belongs to the bacterial ribosomal protein bS16 family.

The polypeptide is Small ribosomal subunit protein bS16 (Chelativorans sp. (strain BNC1)).